A 100-amino-acid chain; its full sequence is uncharacterized protein (100 aa).

The chain crosses the membrane as a helical span at residues 62 to 82 (IPIVIIVSIFILLIIGSISLY).

It localises to the membrane. This is an uncharacterized protein from Dictyostelium discoideum (Social amoeba).